Reading from the N-terminus, the 741-residue chain is 2-5A-dependent ribonuclease (741 aa).

The tract at residues 1–21 (MESRDHNNPQEGPTSSSGRRA) is disordered. The span at 9 to 18 (PQEGPTSSSG) shows a compositional bias: polar residues. 9 ANK repeats span residues 24-53 (EDNH…NVNF), 58-87 (GGWT…DPVL), 91-120 (NGAT…DVNE), 124-153 (YGFT…NVNL), 167-197 (GGAT…DVNA), 201-234 (MGRN…DVNV), 238-268 (RGKT…EIND), 272-301 (DGKT…STDC), and 303-329 (DLVM…KEDF). 2 2-5A binding (P-loop) regions span residues 229–242 (GADV…GKTP) and 253–275 (GLVQ…DGKT). The Protein kinase domain maps to 365–586 (IDEKYKIADT…LSDLLGHPFF (222 aa)). A C6-type; atypical zinc finger spans residues 395-444 (CEGSPRAQREVSCLQSSRENSHLVTFYGSESHRGHLFVCVTLCEQTLEAC). One can recognise a KEN domain in the interval 589 to 723 (WESRYRTLRN…KHFPQTHSPN (135 aa)). At Lys-684 the chain carries N6-acetyllysine. Positions 715-741 (HFPQTHSPNKPQCDGAGGASGLASPGC) are disordered.

This sequence belongs to the protein kinase superfamily. As to quaternary structure, monomer (inactive form) or homodimer. Interacts with ABCE1; this interaction inhibits the RNASEL. It depends on Mn(2+) as a cofactor. Mg(2+) is required as a cofactor. Highly expressed in spleen and thymus followed by prostate, testis, uterus, small intestine, colon and peripheral blood leukocytes.

It localises to the cytoplasm. The protein localises to the mitochondrion. After binding to 2-5A (5'-phosphorylated 2',5'-linked oligoadenylates) the homodimerization and subsequent activation occurs. Inhibited by RNASEL inhibitor ABCE1/RLI, a cytoplasmic member of the ATP-binding cassette (ABC) transporter family. Its function is as follows. Endoribonuclease that functions in the interferon (IFN) antiviral response. In INF treated and virus infected cells, RNASEL probably mediates its antiviral effects through a combination of direct cleavage of single-stranded viral RNAs, inhibition of protein synthesis through the degradation of rRNA, induction of apoptosis, and induction of other antiviral genes. RNASEL mediated apoptosis is the result of a JNK-dependent stress-response pathway leading to cytochrome c release from mitochondria and caspase-dependent apoptosis. Therefore, activation of RNASEL could lead to elimination of virus infected cells under some circumstances. In the crosstalk between autophagy and apoptosis proposed to induce autophagy as an early stress response to small double-stranded RNA and at later stages of prolonged stress to activate caspase-dependent proteolytic cleavage of BECN1 to terminate autophagy and promote apoptosis. Might play a central role in the regulation of mRNA turnover. Cleaves 3' of UpNp dimers, with preference for UU and UA sequences, to sets of discrete products ranging from between 4 and 22 nucleotides in length. This chain is 2-5A-dependent ribonuclease (RNASEL), found in Homo sapiens (Human).